We begin with the raw amino-acid sequence, 97 residues long: UPF0235 protein DET1292 (97 aa).

The protein belongs to the UPF0235 family.

This chain is UPF0235 protein DET1292, found in Dehalococcoides mccartyi (strain ATCC BAA-2266 / KCTC 15142 / 195) (Dehalococcoides ethenogenes (strain 195)).